The sequence spans 239 residues: Lactate utilization protein A (239 aa).

Belongs to the LutA/YkgE family.

Functionally, is involved in L-lactate degradation and allows cells to grow with lactate as the sole carbon source. This chain is Lactate utilization protein A, found in Bacillus cereus (strain B4264).